A 448-amino-acid chain; its full sequence is 3-phosphoshikimate 1-carboxyvinyltransferase (448 aa).

3-phosphoshikimate-binding residues include lysine 28, serine 29, and arginine 33. Lysine 28 contributes to the phosphoenolpyruvate binding site. Residues glycine 100 and arginine 128 each contribute to the phosphoenolpyruvate site. The 3-phosphoshikimate site is built by serine 173, glutamine 175, aspartate 326, and lysine 353. A phosphoenolpyruvate-binding site is contributed by glutamine 175. Aspartate 326 acts as the Proton acceptor in catalysis. Phosphoenolpyruvate contacts are provided by arginine 357 and arginine 405.

Belongs to the EPSP synthase family. Monomer.

The protein localises to the cytoplasm. It catalyses the reaction 3-phosphoshikimate + phosphoenolpyruvate = 5-O-(1-carboxyvinyl)-3-phosphoshikimate + phosphate. It functions in the pathway metabolic intermediate biosynthesis; chorismate biosynthesis; chorismate from D-erythrose 4-phosphate and phosphoenolpyruvate: step 6/7. Its function is as follows. Catalyzes the transfer of the enolpyruvyl moiety of phosphoenolpyruvate (PEP) to the 5-hydroxyl of shikimate-3-phosphate (S3P) to produce enolpyruvyl shikimate-3-phosphate and inorganic phosphate. The protein is 3-phosphoshikimate 1-carboxyvinyltransferase of Sinorhizobium fredii (strain NBRC 101917 / NGR234).